The chain runs to 314 residues: DNA-directed RNA polymerase subunit alpha (314 aa).

Residues 1–227 are alpha N-terminal domain (alpha-NTD); it reads MTYFQIECVE…SLFYPLTNLN (227 aa). Residues 239 to 314 are alpha C-terminal domain (alpha-CTD); it reads EEEINQVLIE…LPKEKNIQNT (76 aa).

The protein belongs to the RNA polymerase alpha chain family. In plastids the minimal PEP RNA polymerase catalytic core is composed of four subunits: alpha, beta, beta', and beta''. When a (nuclear-encoded) sigma factor is associated with the core the holoenzyme is formed, which can initiate transcription.

It is found in the plastid. It localises to the chloroplast. It catalyses the reaction RNA(n) + a ribonucleoside 5'-triphosphate = RNA(n+1) + diphosphate. In terms of biological role, DNA-dependent RNA polymerase catalyzes the transcription of DNA into RNA using the four ribonucleoside triphosphates as substrates. This Gracilaria tenuistipitata var. liui (Red alga) protein is DNA-directed RNA polymerase subunit alpha.